Reading from the N-terminus, the 133-residue chain is Small ribosomal subunit protein uS8 (133 aa).

This sequence belongs to the universal ribosomal protein uS8 family. In terms of assembly, part of the 30S ribosomal subunit. Contacts proteins S5 and S12.

Its function is as follows. One of the primary rRNA binding proteins, it binds directly to 16S rRNA central domain where it helps coordinate assembly of the platform of the 30S subunit. In Anaplasma phagocytophilum (strain HZ), this protein is Small ribosomal subunit protein uS8.